The primary structure comprises 541 residues: T-complex protein 1 subunit epsilon (541 aa).

At A2 the chain carries N-acetylalanine. K20 participates in a covalent cross-link: Glycyl lysine isopeptide (Lys-Gly) (interchain with G-Cter in SUMO2). S26 is subject to Phosphoserine. Residue G53 participates in ADP binding. G53 contacts ATP. D104 provides a ligand contact to Mg(2+). ADP contacts are provided by G105, T106, T107, and S175. ATP is bound by residues T106 and T107. Glycyl lysine isopeptide (Lys-Gly) (interchain with G-Cter in SUMO2) cross-links involve residues K210, K214, K265, K275, and K279. The residue at position 346 (S346) is a Phosphoserine. A Glycyl lysine isopeptide (Lys-Gly) (interchain with G-Cter in SUMO2) cross-link involves residue K392. 4 residues coordinate ADP: G422, D492, E508, and K513. G422 is an ATP binding site. S539 carries the phosphoserine modification.

It belongs to the TCP-1 chaperonin family. Component of the chaperonin-containing T-complex (TRiC), a hexadecamer composed of two identical back-to-back stacked rings enclosing a protein folding chamber. Each ring is made up of eight different subunits: TCP1/CCT1, CCT2, CCT3, CCT4, CCT5, CCT6A/CCT6, CCT7, CCT8. Interacts with PACRG. Interacts with DNAAF4. Interacts with DLEC1. Interacts with SPMAP2. Ubiquitinated by the DCX(DCAF12) complex specifically recognizes the diglutamate (Glu-Glu) at the C-terminus, leading to its degradation.

The protein localises to the cytoplasm. It localises to the cytoskeleton. The protein resides in the microtubule organizing center. Its subcellular location is the centrosome. It carries out the reaction ATP + H2O = ADP + phosphate + H(+). Functionally, component of the chaperonin-containing T-complex (TRiC), a molecular chaperone complex that assists the folding of actin, tubulin and other proteins upon ATP hydrolysis. The TRiC complex mediates the folding of WRAP53/TCAB1, thereby regulating telomere maintenance. As part of the TRiC complex may play a role in the assembly of BBSome, a complex involved in ciliogenesis regulating transports vesicles to the cilia. The polypeptide is T-complex protein 1 subunit epsilon (CCT5) (Pongo abelii (Sumatran orangutan)).